The chain runs to 240 residues: Phosphoribosylaminoimidazole-succinocarboxamide synthase (240 aa).

It belongs to the SAICAR synthetase family.

The enzyme catalyses 5-amino-1-(5-phospho-D-ribosyl)imidazole-4-carboxylate + L-aspartate + ATP = (2S)-2-[5-amino-1-(5-phospho-beta-D-ribosyl)imidazole-4-carboxamido]succinate + ADP + phosphate + 2 H(+). The protein operates within purine metabolism; IMP biosynthesis via de novo pathway; 5-amino-1-(5-phospho-D-ribosyl)imidazole-4-carboxamide from 5-amino-1-(5-phospho-D-ribosyl)imidazole-4-carboxylate: step 1/2. The sequence is that of Phosphoribosylaminoimidazole-succinocarboxamide synthase from Anoxybacillus flavithermus (strain DSM 21510 / WK1).